Consider the following 292-residue polypeptide: uncharacterized protein (292 aa).

Belongs to the glycosyltransferase 2 family. WaaE/KdtX subfamily.

This is an uncharacterized protein from Rickettsia typhi (strain ATCC VR-144 / Wilmington).